Consider the following 241-residue polypeptide: MGLELYLDLMSQPCRAVYIFAKKNGIPFQLRTIELLKGQQYTDSFAQVNPLRKVPALKDGDFVLAESVAILLYLSRKYKAPDHWYPQDLQTRARVDEYLAWQHTALRSCCTRAMWQKMMFPVFLGQPVPPEMLASTLAELDGCLQVLEDKFLRNQAFLTGSHISVADLVAITELMHPVSAGCKIFESRPKLAAWRQRVEAEVGESLFQEAHEVVLKAKDMPPLMDPALKEKLKLSVQCLLH.

The GST N-terminal domain occupies 2–82 (GLELYLDLMS…YLSRKYKAPD (81 aa)). Glutathione is bound by residues 53–54 (KV) and 66–67 (ES). The region spanning 88 to 222 (DLQTRARVDE…VVLKAKDMPP (135 aa)) is the GST C-terminal domain.

The protein belongs to the GST superfamily. Theta family. As to quaternary structure, homodimer. In terms of tissue distribution, expressed strongly in liver, and at lower levels in kidney and testis.

Its subcellular location is the cytoplasm. It catalyses the reaction RX + glutathione = an S-substituted glutathione + a halide anion + H(+). Its function is as follows. Conjugation of reduced glutathione to a wide number of exogenous and endogenous hydrophobic electrophiles. Shows high activity towards 4-nitrobenzyl chloride (4-NBC). Also has lower activity towards 1,2-epoxy-3-(p-nitrophenoxy)propane (EPNP), cumene hydroperoxide, 1-chloro-2,4-dinitrobenzene (CDNB), 7-chloro-4-nitrobenzo-2-oxa-1,3-diazole (NBD-Cl), and ethacrynic acid. This chain is Glutathione S-transferase theta-3, found in Mus musculus (Mouse).